The chain runs to 523 residues: 2-isopropylmalate synthase (523 aa).

The Pyruvate carboxyltransferase domain occupies 5–267; sequence VIIFDTTLRD…HTNINHHEIW (263 aa). D14, H202, H204, and N238 together coordinate Mn(2+). Residues 392-523 are regulatory domain; it reads RLDYFSVQSG…QNKENNKETV (132 aa).

It belongs to the alpha-IPM synthase/homocitrate synthase family. LeuA type 1 subfamily. As to quaternary structure, homodimer. Mn(2+) serves as cofactor.

Its subcellular location is the cytoplasm. It catalyses the reaction 3-methyl-2-oxobutanoate + acetyl-CoA + H2O = (2S)-2-isopropylmalate + CoA + H(+). The protein operates within amino-acid biosynthesis; L-leucine biosynthesis; L-leucine from 3-methyl-2-oxobutanoate: step 1/4. Functionally, catalyzes the condensation of the acetyl group of acetyl-CoA with 3-methyl-2-oxobutanoate (2-ketoisovalerate) to form 3-carboxy-3-hydroxy-4-methylpentanoate (2-isopropylmalate). This is 2-isopropylmalate synthase from Salmonella typhi.